Here is a 272-residue protein sequence, read N- to C-terminus: Cytochrome c1 (272 aa).

Positions 1–24 are cleaved as a signal peptide; sequence MTTIVKRALVAAGMVLAIGGAAQA. Heme c-binding residues include cysteine 61, cysteine 64, histidine 65, and methionine 200. Residues 244 to 261 traverse the membrane as a helical segment; the sequence is LGLKVLLFLGVLTAMLLA.

As to quaternary structure, the main subunits of complex b-c1 are: cytochrome b, cytochrome c1 and the Rieske protein. In terms of processing, binds 1 heme c group covalently per subunit.

The protein localises to the cell membrane. Functionally, component of the ubiquinol-cytochrome c reductase complex (complex III or cytochrome b-c1 complex), which is a respiratory chain that generates an electrochemical potential coupled to ATP synthesis. This is Cytochrome c1 (petC) from Rhodospirillum rubrum.